Reading from the N-terminus, the 205-residue chain is Small ribosomal subunit protein uS4 (205 aa).

The segment covering 1–12 (MSKRIQAKHKLD) has biased composition (basic residues). Residues 1–49 (MSKRIQAKHKLDRRMGQNIWGRPKSPVNRREYGPGQHGQRRKGKLSDFG) are disordered. The S4 RNA-binding domain occupies 94-156 (RRLDAVIYRA…SKQLEIVVVA (63 aa)).

Belongs to the universal ribosomal protein uS4 family. Part of the 30S ribosomal subunit. Contacts protein S5. The interaction surface between S4 and S5 is involved in control of translational fidelity.

Functionally, one of the primary rRNA binding proteins, it binds directly to 16S rRNA where it nucleates assembly of the body of the 30S subunit. With S5 and S12 plays an important role in translational accuracy. The chain is Small ribosomal subunit protein uS4 from Methylobacterium nodulans (strain LMG 21967 / CNCM I-2342 / ORS 2060).